A 468-amino-acid polypeptide reads, in one-letter code: 6-phospho-beta-galactosidase 2 (468 aa).

D-galactose 6-phosphate-binding residues include Q19, H116, N159, E160, and N297. Residue E160 is the Proton donor of the active site. Catalysis depends on E375, which acts as the Nucleophile. Residues S428, W429, K435, and Y437 each coordinate D-galactose 6-phosphate.

Belongs to the glycosyl hydrolase 1 family.

It carries out the reaction a 6-phospho-beta-D-galactoside + H2O = D-galactose 6-phosphate + an alcohol. It functions in the pathway carbohydrate metabolism; lactose degradation; D-galactose 6-phosphate and beta-D-glucose from lactose 6-phosphate: step 1/1. This Streptococcus pneumoniae (strain ATCC BAA-255 / R6) protein is 6-phospho-beta-galactosidase 2.